The chain runs to 356 residues: Tyrosine recombinase XerS (356 aa).

Residues 16-121 form the Core-binding (CB) domain; sequence IMPWFVLDYY…ALSSLYKYLT (106 aa). Residues 169 to 354 form the Tyr recombinase domain; the sequence is EFLDYVDCEY…VNDEQKNALD (186 aa). Active-site residues include arginine 210, lysine 234, histidine 306, arginine 309, and histidine 332. The active-site O-(3'-phospho-DNA)-tyrosine intermediate is tyrosine 341.

It belongs to the 'phage' integrase family. XerS subfamily.

It localises to the cytoplasm. Its activity is regulated as follows. FtsK is required for recombination. In terms of biological role, site-specific tyrosine recombinase, which acts by catalyzing the cutting and rejoining of the recombining DNA molecules. Essential to convert dimers of the bacterial chromosome into monomers to permit their segregation at cell division. The protein is Tyrosine recombinase XerS of Streptococcus uberis (strain ATCC BAA-854 / 0140J).